The primary structure comprises 175 residues: Centrosomal protein 20 (175 aa).

The interval 1 to 104 (MATIAELKAV…IVEDANGKSV (104 aa)) is necessary and sufficient for homooligomerization and localization to centrosomes and pericentriolar satellites. One can recognise a LisH domain in the interval 49–81 (ENLLINELIREYLEFNKYKYSASVLTAEAGQPE). The segment at 137–166 (RQNLAKPSTERNQKDRIPEPGRMAGTSIEE) is disordered. The span at 144–155 (STERNQKDRIPE) shows a compositional bias: basic and acidic residues.

This sequence belongs to the CEP43 family. Homooligomer; probably required for localization to centrosomes.

The protein resides in the cell projection. The protein localises to the cilium. It is found in the cytoplasm. It localises to the cytoskeleton. Its subcellular location is the cilium basal body. The protein resides in the microtubule organizing center. The protein localises to the centrosome. It is found in the cytoplasmic granule. It localises to the centriolar satellite. Functionally, involved in the biogenesis of cilia. Required for the recruitment of PLK1 to centrosomes and S phase progression. This is Centrosomal protein 20 (CEP20) from Gallus gallus (Chicken).